A 274-amino-acid polypeptide reads, in one-letter code: uncharacterized protein (274 aa).

An ATP-binding site is contributed by 104-111 (GVFAIGKS).

This is an uncharacterized protein from Mycoplasma genitalium (strain ATCC 33530 / DSM 19775 / NCTC 10195 / G37) (Mycoplasmoides genitalium).